Here is a 1873-residue protein sequence, read N- to C-terminus: Voltage-dependent L-type calcium channel subunit alpha-1S (1873 aa).

Positions 1-23 (MEPSSPQDEGLRKKQPKKPLPEV) are disordered. The Cytoplasmic segment spans residues 1-51 (MEPSSPQDEGLRKKQPKKPLPEVLPRPPRALFCLTLQNPLRKACISIVEWK). The I repeat unit spans residues 38-337 (NPLRKACISI…LVLGVLSGEF (300 aa)). Residues 52–70 (PFETIILLTIFANCVALAV) traverse the membrane as a helical segment. At 71–85 (YLPMPEDDNNSLNLG) the chain is on the extracellular side. An N-linked (GlcNAc...) asparagine glycan is attached at Asn79. The helical transmembrane segment at 86-106 (LEKLEYFFLTVFSIEAAMKII) threads the bilayer. Residues 107 to 115 (AYGFLFHQD) are Cytoplasmic-facing. A helical membrane pass occupies residues 116–136 (AYLRSGWNVLDFIIVFLGVFT). At 137–160 (AILEQVNVIQSNTAPMSSKGAGLD) the chain is on the extracellular side. A helical transmembrane segment spans residues 161–179 (VKALRAFRVLRPLRLVSGV). The Cytoplasmic segment spans residues 180–196 (PSLQVVLNSIFKAMLPL). The helical transmembrane segment at 197 to 218 (FHIALLVLFMVIIYAIIGLELF) threads the bilayer. Residues 219-279 (KGKMHKTCYY…HGITHFDNFG (61 aa)) lie on the Extracellular side of the membrane. Cystine bridges form between Cys226/Cys254 and Cys245/Cys261. N-linked (GlcNAc...) asparagine glycosylation is present at Asn257. An intramembrane region (pore-forming) is located at residues 280–301 (FSMLTVYQCITMEGWTDVLYWV). Positions 290–293 (TMEG) match the Selectivity filter of repeat I motif. Glu292 serves as a coordination point for Ca(2+). At 302-309 (NDAIGNEW) the chain is on the extracellular side. The helical transmembrane segment at 310-330 (PWIYFVTLILLGSFFILNLVL) threads the bilayer. The Cytoplasmic segment spans residues 331–432 (GVLSGEFTKE…WKCHDLVKSR (102 aa)). Residues 357-374 (QQLEEDLRGYMSWITQGE) are binding to the beta subunit. 2 positions are modified to phosphoserine: Ser393 and Ser397. An II repeat occupies 418 to 664 (NRVFRWKCHD…VFLAIAVDNL (247 aa)). A helical membrane pass occupies residues 433 to 451 (VFYWLVILIVALNTLSIAS). The Extracellular portion of the chain corresponds to 452-462 (EHHNQPLWLTH). Residues 463–483 (LQDIANRVLLSLFTIEMLLKM) form a helical membrane-spanning segment. Residues 484 to 494 (YGLGLRQYFMS) lie on the Cytoplasmic side of the membrane. Residues 495-514 (IFNRFDCFVVCSGILELLLV) form a helical membrane-spanning segment. Topologically, residues 515 to 523 (ESGAMTPLG) are extracellular. A helical membrane pass occupies residues 524–542 (ISVLRCIRLLRLFKITKYW). At 543-561 (TSLSNLVASLLNSIRSIAS) the chain is on the cytoplasmic side. The helical transmembrane segment at 562–581 (LLLLLFLFIIIFALLGMQLF) threads the bilayer. Residues 582–601 (GGRYDFEDTEVRRSNFDNFP) lie on the Extracellular side of the membrane. The segment at residues 602-623 (QALISVFQVLTGEDWNSVMYNG) is an intramembrane region (pore-forming). Residues 612 to 615 (TGED) carry the Selectivity filter of repeat II motif. Ca(2+) is bound at residue Glu614. The Extracellular portion of the chain corresponds to 624 to 633 (IMAYGGPSYP). Residues 634 to 653 (GVLVCIYFIILFVCGNYILL) form a helical membrane-spanning segment. Residues 654-799 (NVFLAIAVDN…VLCHRIVNAT (146 aa)) are Cytoplasmic-facing. Disordered regions lie at residues 673–717 (AQKA…IPTT) and 731–757 (EVKD…VSPR). Position 687 is a phosphoserine; by PKA (Ser687). The segment covering 690 to 711 (LPDKTEEEKSVMAKKLEQKPKG) has biased composition (basic and acidic residues). Positions 742–751 (PGDDEEDEPE) are enriched in acidic residues. An interaction with STAC, STAC2 and STAC3 (via SH3 domains) region spans residues 747-760 (EDEPEIPVSPRPRP). An III repeat occupies 786 to 1068 (NKVRVLCHRI…IFVGFVIVTF (283 aa)). The chain crosses the membrane as a helical span at residues 800–818 (WFTNFILLFILLSSAALAA). At 819 to 830 (EDPIRAESVRNQ) the chain is on the extracellular side. A helical transmembrane segment spans residues 831 to 850 (ILGYFDIAFTSVFTVEIVLK). At 851 to 866 (MTTYGAFLHKGSFCRN) the chain is on the cytoplasmic side. The helical transmembrane segment at 867-885 (YFNILDLLVVAVSLISMGL) threads the bilayer. The Extracellular segment spans residues 886-892 (ESSTISV). Residues 893–911 (VKILRVLRVLRPLRAINRA) form a helical membrane-spanning segment. The Cytoplasmic portion of the chain corresponds to 912 to 930 (KGLKHVVQCVFVAIRTIGN). The helical transmembrane segment at 931–950 (IVLVTTLLQFMFACIGVQLF) threads the bilayer. Over 951–1000 (KGKFFSCNDLSKMTEEECRGYYYVYKDGDPTQMELRPRQWIHNDFHFDNV) the chain is Extracellular. A disulfide bond links Cys957 and Cys968. Positions 988-1077 (RQWIHNDFHF…FQEQGETEYK (90 aa)) are dihydropyridine binding. The segment at residues 1001–1021 (LSAMMSLFTVSTFEGWPQLLY) is an intramembrane region (pore-forming). A Selectivity filter of repeat III motif is present at residues 1012-1015 (TFEG). Residue Glu1014 participates in Ca(2+) binding. Over 1022–1038 (RAIDSNEEDMGPVYNNR) the chain is Extracellular. The helical transmembrane segment at 1039–1060 (VEMAIFFIIYIILIAFFMMNIF) threads the bilayer. Residues 1061 to 1118 (VGFVIVTFQEQGETEYKNCELDKNQRQCVQYALKARPLRCYIPKNPYQYQVWYVVTSS) are Cytoplasmic-facing. Residues 1105–1384 (NPYQYQVWYV…LFVAVIMDNF (280 aa)) form an IV repeat. The chain crosses the membrane as a helical span at residues 1119-1140 (YFEYLMFALIMLNTICLGMQHY). Over 1141-1148 (HQSEEMNH) the chain is Extracellular. Residues 1149 to 1170 (ISDILNVAFTIIFTLEMILKLL) traverse the membrane as a helical segment. The Cytoplasmic portion of the chain corresponds to 1171-1180 (AFKARGYFGD). Residues 1181–1200 (PWNVFDFLIVIGSIIDVILS) form a helical membrane-spanning segment. Residues 1201–1231 (EIDTFLASSGGLYCLGGGCGNVDPDESARIS) lie on the Extracellular side of the membrane. Residues 1232 to 1250 (SAFFRLFRVMRLIKLLSRA) form a helical membrane-spanning segment. Residues 1251 to 1268 (EGVRTLLWTFIKSFQALP) lie on the Cytoplasmic side of the membrane. Residues 1269-1289 (YVALLIVMLFFIYAVIGMQMF) traverse the membrane as a helical segment. Residues 1290 to 1311 (GKIALVDGTQINRNNNFQTFPQ) lie on the Extracellular side of the membrane. The segment at residues 1312–1330 (AVLLLFRCATGEAWQEILL) is an intramembrane region (pore-forming). The Selectivity filter of repeat IV signature appears at 1321–1324 (TGEA). Over 1331-1356 (ACSYGKLCDPESDYAPGEEYTCGTNF) the chain is Extracellular. The dihydropyridine binding stretch occupies residues 1337–1403 (LCDPESDYAP…LGPHHLDEFK (67 aa)). Cys1338 and Cys1352 are disulfide-bonded. Positions 1349 to 1391 (EYTCGTNFAYYYFISFYMLCAFLIINLFVAVIMDNFDYLTRDW) are phenylalkylamine binding. The chain crosses the membrane as a helical span at residues 1357-1381 (AYYYFISFYMLCAFLIINLFVAVIM). The Cytoplasmic portion of the chain corresponds to 1382–1873 (DNFDYLTRDW…SQETLIPPRP (492 aa)). Residues 1522–1542 (KFYATFLIQEHFRKFMKRQEE) are interaction with calmodulin. A Phosphoserine; by PKA and CAMK2 modification is found at Ser1575. A Phosphothreonine; by CK2 modification is found at Thr1579. At Ser1617 the chain carries Phosphoserine; by PKA. Disordered regions lie at residues 1689-1782 (EFPG…RPAP) and 1841-1873 (GMAS…PPRP). Low complexity predominate over residues 1847 to 1858 (GSLSRRSSLGSL).

Belongs to the calcium channel alpha-1 subunit (TC 1.A.1.11) family. CACNA1S subfamily. In terms of assembly, component of a calcium channel complex consisting of a pore-forming alpha subunit (CACNA1S) and the ancillary subunits CACNB1 or CACNB2, CACNG1 and CACNA2D1. The channel complex contains alpha, beta, gamma and delta subunits in a 1:1:1:1 ratio, i.e. it contains either CACNB1 or CACNB2. CACNA1S channel activity is modulated by the auxiliary subunits (CACNB1 or CACNB2, CACNG1 and CACNA2D1). Interacts with DYSF and JSRP1. Interacts with RYR1. Interacts with STAC, STAC2 and STAC3 (via their SH3 domains). Interaction with STAC3 promotes expression at the cell membrane. Interaction with STAC2 promotes expression at the cell membrane, but with much lower efficiency than STAC3. Interaction with STAC1 leads to very low levels expression at the cell membrane, much less than the levels observed upon interaction with STAC3 and STAC2. Interacts with CALM. The alpha-1S subunit is found in two isoforms in the skeletal muscle: a minor form of 212 kDa containing the complete amino acid sequence, and a major form of 190 kDa derived from the full-length form by post-translational proteolysis close to Phe-1690. Post-translationally, phosphorylated. Phosphorylation by PKA activates the calcium channel. Both the minor and major forms are phosphorylated in vitro by PKA. Phosphorylation at Ser-1575 is involved in beta-adrenergic-mediated regulation of the channel. Detected in skeletal muscle T-tubules (at protein level).

The protein localises to the cell membrane. It is found in the sarcolemma. Its subcellular location is the T-tubule. The catalysed reaction is Ca(2+)(in) = Ca(2+)(out). Channel activity is blocked by dihydropyridines (DHP), phenylalkylamines, and by benzothiazepines. Functionally, pore-forming, alpha-1S subunit of the voltage-gated calcium channel that gives rise to L-type calcium currents in skeletal muscle. Calcium channels containing the alpha-1S subunit play an important role in excitation-contraction coupling in skeletal muscle via their interaction with RYR1, which triggers Ca(2+) release from the sarcplasmic reticulum and ultimately results in muscle contraction. Long-lasting (L-type) calcium channels belong to the 'high-voltage activated' (HVA) group. This chain is Voltage-dependent L-type calcium channel subunit alpha-1S (CACNA1S), found in Oryctolagus cuniculus (Rabbit).